Reading from the N-terminus, the 469-residue chain is MSSGKITQIIGPVVDVEFGSDAKLPEINNALIVYKDVNGLKTKITLEVALELGDGAVRTIAMESTDGLTRGLEVLDTGKAVSVPVGEATLGRVFNVLGDVIDGGEEFAADAERNPIHKKAPTFDELSTANEVLVTGIKVVDLLAPYLKGGKVGLFGGAGVGKTVLIQELIHNIAQEHGGISVFTGVGERTREGNDLYWEMKESGVIEKTAMVFGQMNEPPGARMRVALTGLTIAEYFRDVQGQDVLLFIDNIFRFTQAGSEVSALLGRMPSAVGYQPTLATEMGQLQERITSTKKGSVTSIQAIYVPADDYTDPAPATAFAHLDATTNLERRLTQMGIYPAVDPLASSSRALTPEIVGEEHYEVAMEVQRVLQRYKELQDIIAILGMDELSDDEKILVGRARRIQFFLSQNFHVAEQFTGQPGSYVPIDKTVHDFKEILEGKYDEVPEDAFRGVGPIEDVLEKAKSMGY.

156–163 contributes to the ATP binding site; it reads GGAGVGKT.

Belongs to the ATPase alpha/beta chains family. F-type ATPases have 2 components, CF(1) - the catalytic core - and CF(0) - the membrane proton channel. CF(1) has five subunits: alpha(3), beta(3), gamma(1), delta(1), epsilon(1). CF(0) has three main subunits: a(1), b(2) and c(9-12). The alpha and beta chains form an alternating ring which encloses part of the gamma chain. CF(1) is attached to CF(0) by a central stalk formed by the gamma and epsilon chains, while a peripheral stalk is formed by the delta and b chains.

It localises to the cell membrane. The catalysed reaction is ATP + H2O + 4 H(+)(in) = ADP + phosphate + 5 H(+)(out). Produces ATP from ADP in the presence of a proton gradient across the membrane. The catalytic sites are hosted primarily by the beta subunits. In Lactococcus lactis subsp. lactis (strain IL1403) (Streptococcus lactis), this protein is ATP synthase subunit beta.